The primary structure comprises 452 residues: Pup--protein ligase (452 aa).

Residue Glu-9 coordinates Mg(2+). Arg-53 is an ATP binding site. Position 55 (Tyr-55) interacts with Mg(2+). The active-site Proton acceptor is the Asp-57. Residue Glu-63 participates in Mg(2+) binding. Positions 66 and 419 each coordinate ATP.

It belongs to the Pup ligase/Pup deamidase family. Pup-conjugating enzyme subfamily.

The catalysed reaction is ATP + [prokaryotic ubiquitin-like protein]-L-glutamate + [protein]-L-lysine = ADP + phosphate + N(6)-([prokaryotic ubiquitin-like protein]-gamma-L-glutamyl)-[protein]-L-lysine.. It functions in the pathway protein degradation; proteasomal Pup-dependent pathway. It participates in protein modification; protein pupylation. Catalyzes the covalent attachment of the prokaryotic ubiquitin-like protein modifier Pup to the proteasomal substrate proteins, thereby targeting them for proteasomal degradation. This tagging system is termed pupylation. The ligation reaction involves the side-chain carboxylate of the C-terminal glutamate of Pup and the side-chain amino group of a substrate lysine. The sequence is that of Pup--protein ligase from Thermobifida fusca (strain YX).